A 388-amino-acid chain; its full sequence is AdoMet-dependent heme synthase (388 aa).

Low complexity predominate over residues 1–12; the sequence is MHNANHPHGNGH. The interval 1–29 is disordered; sequence MHNANHPHGNGHPAEKKGMGAHSGAMNMP. The region spanning 34–257 is the Radical SAM core domain; the sequence is DGSPACRLIA…TSMHLKATCA (224 aa). Positions 50, 54, and 57 each coordinate [4Fe-4S] cluster.

Belongs to the radical SAM superfamily. [4Fe-4S] cluster is required as a cofactor.

The catalysed reaction is Fe-coproporphyrin III + 2 S-adenosyl-L-methionine = heme b + 2 5'-deoxyadenosine + 2 L-methionine + 2 CO2. Its pathway is porphyrin-containing compound metabolism; protoheme biosynthesis. In terms of biological role, involved in siroheme-dependent heme b biosynthesis. Catalyzes the conversion of Fe-coproporphyrin III into heme by the oxidative decarboxylation of two propionate side chains. The protein is AdoMet-dependent heme synthase of Oleidesulfovibrio alaskensis (strain ATCC BAA-1058 / DSM 17464 / G20) (Desulfovibrio alaskensis).